We begin with the raw amino-acid sequence, 604 residues long: Matrix metalloproteinase-21 (604 aa).

Residues 1–22 (MPSIKLLVWCCLCVISPRLCHS) form the signal peptide. The propeptide occupies 23–180 (EKLFHSRDRS…PDPPKIRRKR (158 aa)). Residues 132 to 175 (KPRCGVPDNQMAKKETEKPTAAQSLENKTKDSENVTQQNPDPPK) are disordered. The short motif at 133–140 (PRCGVPDN) is the Cysteine switch element. Residue Cys135 participates in Zn(2+) binding. Asn158 and Asn165 each carry an N-linked (GlcNAc...) asparagine glycan. A Zn(2+)-binding site is contributed by His318. Glu319 is a catalytic residue. Zn(2+) contacts are provided by His322 and His328. Cysteines 364 and 595 form a disulfide. 4 Hemopexin repeats span residues 365-424 (EGPF…WHGI), 426-482 (VQNI…FPGI), 483-531 (PSPI…FPAV), and 538-594 (KGNI…WFDI). N-linked (GlcNAc...) asparagine glycosylation is found at Asn404 and Asn407.

It belongs to the peptidase M10A family. Zn(2+) is required as a cofactor. The cofactor is Ca(2+). In terms of processing, the precursor is cleaved by a furin endopeptidase.

It localises to the secreted. Plays a specialized role in the generation of left-right asymmetry during embryogenesis. May act as a negative regulator of the NOTCH-signaling pathway. This Xenopus laevis (African clawed frog) protein is Matrix metalloproteinase-21 (mmp21).